Reading from the N-terminus, the 233-residue chain is MNTQEIINLIANSKKKTLTVAYLTGNLKNIDFKSFEFFGTENFGILFGEYEEIVKLIENNKEHIEKYKLEIKARNSAIPLANLAKYNARIEPGAIIRDLVEIGDGAVIMMGAVINIGAKIGEGTMIDMNAVVGGRAIIGKNCHIGAGAVIAGVIEPPSAQPVIIEDNVMVGANAVILEGVRIGQNSVIAAGAVVIEDVPPNSVVAGVPAKIIKKVDEKTKQKTQIVEGLRKLR.

The protein belongs to the transferase hexapeptide repeat family. DapH subfamily.

It catalyses the reaction (S)-2,3,4,5-tetrahydrodipicolinate + acetyl-CoA + H2O = L-2-acetamido-6-oxoheptanedioate + CoA. It functions in the pathway amino-acid biosynthesis; L-lysine biosynthesis via DAP pathway; LL-2,6-diaminopimelate from (S)-tetrahydrodipicolinate (acetylase route): step 1/3. Catalyzes the transfer of an acetyl group from acetyl-CoA to tetrahydrodipicolinate. The protein is 2,3,4,5-tetrahydropyridine-2,6-dicarboxylate N-acetyltransferase of Thermosipho africanus (strain TCF52B).